The following is a 558-amino-acid chain: Armadillo repeat-containing X-linked protein 5 (558 aa).

Basic and acidic residues-rich tracts occupy residues 1–14 and 139–156; these read MVDS…RGKA and KSHD…REEA. 2 disordered regions span residues 1 to 34 and 139 to 163; these read MVDS…NGKT and KSHD…MKSS. ARM repeat units lie at residues 300 to 339, 422 to 461, 463 to 503, and 520 to 558; these read CKSR…GISP, VKFE…CLSK, HANT…NINF, and SELI…ILKL.

It belongs to the eutherian X-chromosome-specific Armcx family.

The sequence is that of Armadillo repeat-containing X-linked protein 5 (ARMCX5) from Pongo abelii (Sumatran orangutan).